A 303-amino-acid polypeptide reads, in one-letter code: Protease HtpX homolog (303 aa).

Transmembrane regions (helical) follow at residues 19–39 (IIIF…VSYF) and 41–61 (LGEF…YYAY). Histidine 146 contacts Zn(2+). Glutamate 147 is an active-site residue. Histidine 150 provides a ligand contact to Zn(2+). 2 consecutive transmembrane segments (helical) span residues 156–176 (VRLQ…GDSL) and 192–212 (NILG…ATLL). Glutamate 221 lines the Zn(2+) pocket.

This sequence belongs to the peptidase M48B family. It depends on Zn(2+) as a cofactor.

It is found in the cell inner membrane. The sequence is that of Protease HtpX homolog from Dictyoglomus thermophilum (strain ATCC 35947 / DSM 3960 / H-6-12).